Reading from the N-terminus, the 322-residue chain is Lignin-forming anionic peroxidase (322 aa).

The N-terminal stretch at 1–27 (MNTPTQSFRAKAAIFSLLLLSCMQCHA) is a signal peptide. A Pyrrolidone carboxylic acid modification is found at Gln28. 4 disulfide bridges follow: Cys38-Cys118, Cys71-Cys76, Cys124-Cys318, and Cys203-Cys229. His69 functions as the Proton acceptor in the catalytic mechanism. Asp70, Val73, Gly75, Asp77, and Ser79 together coordinate Ca(2+). Pro166 provides a ligand contact to substrate. A heme b-binding site is contributed by His196. Thr197 contacts Ca(2+). N-linked (GlcNAc...) asparagine glycosylation is present at Asn213. Asp242, Thr245, and Asp250 together coordinate Ca(2+).

This sequence belongs to the peroxidase family. Classical plant (class III) peroxidase subfamily. Ca(2+) is required as a cofactor. Heme b serves as cofactor. As to expression, mesophyll protoplasts and to a much lesser extent, roots and germinating seeds.

It is found in the secreted. It carries out the reaction 2 a phenolic donor + H2O2 = 2 a phenolic radical donor + 2 H2O. In terms of biological role, removal of H(2)O(2), oxidation of toxic reductants, biosynthesis and degradation of lignin, suberization, auxin catabolism, response to environmental stresses such as wounding, pathogen attack and oxidative stress. These functions might be dependent on each isozyme/isoform in each plant tissue. Functionally, plays an integral role in secondary cell wall biosynthesis by the polymerization of cinnamyl alcohols into lignin and by forming rigid cross-links between cellulose, pectin, hydroxy-proline-rich glycoproteins, and lignin. The protein is Lignin-forming anionic peroxidase of Nicotiana sylvestris (Wood tobacco).